The primary structure comprises 718 residues: Sodium/myo-inositol cotransporter (718 aa).

Residues 1 to 9 lie on the Extracellular side of the membrane; the sequence is MRAVLDTAD. Residues 10-29 form a helical membrane-spanning segment; it reads IAIVALYFILVMCIGFFAMW. Topologically, residues 30 to 38 are cytoplasmic; the sequence is KSNRSTVSG. A helical transmembrane segment spans residues 39-57; sequence YFLAGRSMTWVAIGASLFV. Over 58–86 the chain is Extracellular; sequence SNIGSEHFIGLAGSGAASGFAVGAWEFNA. The helical transmembrane segment at 87–110 threads the bilayer; it reads LLLLQLLGWVFIPIYIRSGVYTMP. Over 111-123 the chain is Cytoplasmic; it reads EYLSKRFGGHRIQ. The chain crosses the membrane as a helical span at residues 124–144; it reads VYFAALSLILYIFTKLSVDLY. Topologically, residues 145–157 are extracellular; sequence SGALFIQESLGWN. Residues 158 to 183 traverse the membrane as a helical segment; sequence LYVSVILLIGMTALLTVTGGLVAVIY. Topologically, residues 184–186 are cytoplasmic; it reads TDT. The chain crosses the membrane as a helical span at residues 187–205; the sequence is LQALLMIIGALTLMIISIM. The Extracellular segment spans residues 206-303; sequence EIGGFEEVKR…HAKGSTLMAG (98 aa). Asn-232 carries an N-linked (GlcNAc...) asparagine glycan. Residues 304-324 form a helical membrane-spanning segment; sequence FLKLLPMFIIVVPGMISRILF. Topologically, residues 325-353 are cytoplasmic; the sequence is TDDIACINPEHCMLVCGSRAGCSNIAYPR. A helical membrane pass occupies residues 354–376; the sequence is LVMKLVPVGLRGLMMAVMIAALM. Over 377-406 the chain is Extracellular; it reads SDLDSIFNSASTIFTLDVYKLIRKSASSRE. A helical membrane pass occupies residues 407–430; that stretch reads LMIVGRIFVAFMVVISIAWVPIIV. At 431 to 443 the chain is on the cytoplasmic side; the sequence is EMQGGQMYLYIQE. Residues 444–462 form a helical membrane-spanning segment; it reads VADYLTPPVAALFLLAIFW. Over 463-510 the chain is Extracellular; that stretch reads KRCNEQGAFYGGMAGFVLGAVRLILAFAYRAPECDQPDNRPGFIKDIH. A helical membrane pass occupies residues 511–532; it reads YMYVATGLFWVTGLITVIVSLL. The Cytoplasmic portion of the chain corresponds to 533 to 695; sequence TPPPTKEQIR…QMLEETRQVK (163 aa). 2 positions are modified to phosphoserine: Ser-594 and Ser-632. The helical transmembrane segment at 696 to 716 threads the bilayer; that stretch reads VILNIGLFAVCSLGIFMFVYF. Residues 717-718 are Extracellular-facing; sequence SL.

Belongs to the sodium:solute symporter (SSF) (TC 2.A.21) family. As to quaternary structure, interacts with KCNQ2 (via the pore module). Interacts with KCNQ1; this interaction is direct. Forms coregulatory complexes with ion channels KCNQ2-KCNQ3 and KCNQ1-KCNE2.

It is found in the apical cell membrane. Its subcellular location is the basolateral cell membrane. It carries out the reaction myo-inositol(out) + 2 Na(+)(out) = myo-inositol(in) + 2 Na(+)(in). The enzyme catalyses scyllo-inositol(out) + 2 Na(+)(out) = scyllo-inositol(in) + 2 Na(+)(in). In terms of biological role, electrogenic Na(+)-coupled sugar symporter that actively transports myo-inositol and its stereoisomer scyllo-inositol across the plasma membrane, with a Na(+) to sugar coupling ratio of 2:1. Maintains myo-inositol concentration gradient that defines cell volume and fluid balance during osmotic stress, in particular in the fetoplacental unit and central nervous system. Forms coregulatory complexes with voltage-gated K(+) ion channels, allosterically altering ion selectivity, voltage dependence and gating kinetics of the channel. In turn, K(+) efflux through the channel forms a local electrical gradient that modulates electrogenic Na(+)-coupled myo-inositol influx through the transporter. Associates with KCNQ1-KCNE2 channel in the apical membrane of choroid plexus epithelium and regulates the myo-inositol gradient between blood and cerebrospinal fluid with an impact on neuron excitability. Associates with KCNQ2-KCNQ3 channel altering ion selectivity, increasing Na(+) and Cs(+) permeation relative to K(+) permeation. Provides myo-inositol precursor for biosynthesis of phosphoinositides such as PI(4,5)P2, thus indirectly affecting the activity of phosphoinositide-dependent ion channels and Ca(2+) signaling upon osmotic stress. In Homo sapiens (Human), this protein is Sodium/myo-inositol cotransporter.